A 369-amino-acid chain; its full sequence is Transposase for insertion sequence element IS1201 (369 aa).

This sequence belongs to the transposase mutator family.

In terms of biological role, required for the transposition of the insertion element. The chain is Transposase for insertion sequence element IS1201 from Lactobacillus helveticus (Lactobacillus suntoryeus).